The following is a 242-amino-acid chain: Adapter protein MecA (242 aa).

The protein belongs to the MecA family. As to quaternary structure, homodimer.

Enables the recognition and targeting of unfolded and aggregated proteins to the ClpC protease or to other proteins involved in proteolysis. The chain is Adapter protein MecA from Streptococcus gordonii (strain Challis / ATCC 35105 / BCRC 15272 / CH1 / DL1 / V288).